Reading from the N-terminus, the 655-residue chain is p-hydroxybenzoic acid efflux pump subunit AaeB (655 aa).

Transmembrane regions (helical) follow at residues 13–33, 38–58, 69–89, 93–113, 121–141, 152–172, 370–390, 407–427, 431–451, 459–479, and 482–502; these read FAVKLACAIVLALFVGFHFQL, WAVLTAAIVAAGPAFAAGGEP, LRIIGTFIGCIAALTIIITMI, LLMILVCCIWAGFCTWISSLV, WGLSGYTALIIVITIQAEPLL, EIVIGIVCAIMADLLFSPRSV, LFWLWTGWTSGSGAMVMIAVV, FIYGTLAALPLGLLYFLVIIP, QSMLLLCLSLAVLGFFLGIEV, MGALASTINIIVLDNPMTFHF, and FLDSALGQIVGCMMAFIVILL.

It belongs to the aromatic acid exporter ArAE (TC 2.A.85) family.

It localises to the cell inner membrane. Functionally, forms an efflux pump with AaeA. Could function as a metabolic relief valve, allowing to eliminate certain compounds when they accumulate to high levels in the cell. In Citrobacter koseri (strain ATCC BAA-895 / CDC 4225-83 / SGSC4696), this protein is p-hydroxybenzoic acid efflux pump subunit AaeB.